The sequence spans 365 residues: tRNA/tmRNA (uracil-C(5))-methyltransferase (365 aa).

Positions 189, 217, 222, 238, and 298 each coordinate S-adenosyl-L-methionine. Residue Cys323 is the Nucleophile of the active site. Glu357 acts as the Proton acceptor in catalysis.

It belongs to the class I-like SAM-binding methyltransferase superfamily. RNA M5U methyltransferase family. TrmA subfamily.

It carries out the reaction uridine(54) in tRNA + S-adenosyl-L-methionine = 5-methyluridine(54) in tRNA + S-adenosyl-L-homocysteine + H(+). It catalyses the reaction uridine(341) in tmRNA + S-adenosyl-L-methionine = 5-methyluridine(341) in tmRNA + S-adenosyl-L-homocysteine + H(+). Its function is as follows. Dual-specificity methyltransferase that catalyzes the formation of 5-methyluridine at position 54 (m5U54) in all tRNAs, and that of position 341 (m5U341) in tmRNA (transfer-mRNA). This chain is tRNA/tmRNA (uracil-C(5))-methyltransferase, found in Shewanella sp. (strain ANA-3).